The chain runs to 1778 residues: Internalin I (1778 aa).

A signal peptide spans 1 to 28; that stretch reads MKKKFSIVIISVLLLGYLAPFDTLLVGA. Residues 36–101 are disordered; that stretch reads DTAVKTAEAD…NIKTEINTDK (66 aa). Residues 51 to 62 show a composition bias toward acidic residues; it reads IESETGSDDETA. The span at 63–88 shows a compositional bias: basic and acidic residues; the sequence is EEPKEAKEAEASKETTEKEEKAKTEE. 27 LRR repeats span residues 155–179, 183–204, 205–227, 228–250, 251–272, 277–298, 299–321, 322–344, 345–367, 368–389, 390–412, 413–434, 435–456, 457–478, 479–500, 501–522, 523–544, 545–566, 567–588, 589–610, 611–632, 633–653, 657–678, 685–707, 708–729, 730–751, and 752–773; these read AISQ…EGLQ, NLTS…KDLV, NLVS…EDLV, NLQE…ASLP, VLKE…NPAG, ELET…AKLP, KLKN…NGAT, KLQL…SGLS, ELEM…KNLP, NLVN…NNLP, KLQT…TDLP, QLKT…DNLP, KLEK…TDLP, RLSY…KKLP, LLEW…TNFP, SLNY…TELP, SLKE…HDMP, NLRK…DNLP, KLQS…HDLP, SLET…DNLP, DLTY…GDLP, NLET…GTMD, KLRI…GNLS, NLTE…STLS, RLIY…SNLT, NLQE…SDLE, and NLNK…ANMV. The region spanning 785-872 is the LRRCT domain; it reads TYTLPTVLSY…SAAKVTADAE (88 aa). 3 consecutive MucBP domains span residues 1510–1569, 1575–1634, and 1644–1705; these read DAAA…EQTV, AIKP…PQTI, and SKKS…SQTV. A disordered region spans residues 1716–1742; sequence SKDDPKVKGKTNQPSSTDTKLKVDNNS. Positions 1725-1742 are enriched in polar residues; it reads KTNQPSSTDTKLKVDNNS. The short motif at 1743–1747 is the LPXTG sorting signal element; sequence LPATG. Position 1746 is a pentaglycyl murein peptidoglycan amidated threonine (Thr1746). The propeptide at 1747–1778 is removed by sortase; that stretch reads GDTENMILAVLIGFNMLIVASIFLFRKPKTNQ.

It belongs to the internalin family.

The protein resides in the secreted. Its subcellular location is the cell wall. In terms of biological role, a role in virulence could not be demonstrated. The polypeptide is Internalin I (inlI) (Listeria monocytogenes serovar 1/2a (strain ATCC BAA-679 / EGD-e)).